The chain runs to 135 residues: Large ribosomal subunit protein bL19 (135 aa).

Belongs to the bacterial ribosomal protein bL19 family.

Its function is as follows. This protein is located at the 30S-50S ribosomal subunit interface and may play a role in the structure and function of the aminoacyl-tRNA binding site. The protein is Large ribosomal subunit protein bL19 of Protochlamydia amoebophila (strain UWE25).